The primary structure comprises 299 residues: Methionyl-tRNA formyltransferase (299 aa).

109–112 contributes to the (6S)-5,6,7,8-tetrahydrofolate binding site; it reads SLLP.

The protein belongs to the Fmt family.

The catalysed reaction is L-methionyl-tRNA(fMet) + (6R)-10-formyltetrahydrofolate = N-formyl-L-methionyl-tRNA(fMet) + (6S)-5,6,7,8-tetrahydrofolate + H(+). Functionally, attaches a formyl group to the free amino group of methionyl-tRNA(fMet). The formyl group appears to play a dual role in the initiator identity of N-formylmethionyl-tRNA by promoting its recognition by IF2 and preventing the misappropriation of this tRNA by the elongation apparatus. In Wolbachia pipientis subsp. Culex pipiens (strain wPip), this protein is Methionyl-tRNA formyltransferase.